The chain runs to 1481 residues: Cystic fibrosis transmembrane conductance regulator (1481 aa).

Residues 1–77 (MQRSPLEKAS…KLINALRRCF (77 aa)) lie on the Cytoplasmic side of the membrane. A helical membrane pass occupies residues 78-98 (FWRFMFYGILLYLGEVTKAVQ). Positions 81–365 (FMFYGILLYL…WAVQTWYDSL (285 aa)) constitute an ABC transmembrane type-1 1 domain. At 99–122 (PLLLGRIIASYDPDNKEERSIAIY) the chain is on the extracellular side. A helical transmembrane segment spans residues 123 to 146 (LGIGLCLLFIVRTLLLHPAIFGLH). The Cytoplasmic segment spans residues 147-195 (HIGMQMRIAMFSLIYKKTLKLSSRVLDKISIGQLVSLLSNNLNKFDEGL). The helical transmembrane segment at 196–216 (ALAHFVWIVPLQVALLMGLIW) threads the bilayer. Over 217 to 222 (ELLQAS) the chain is Extracellular. The chain crosses the membrane as a helical span at residues 223–243 (AFCGLGFLIVLALFQAGLGRM). The Cytoplasmic portion of the chain corresponds to 244–298 (MMKYRDQRAGKINERLVITSEMIENIQSVKAYCWEEAMEKMIENLRQTELKLTRK). Residues 299-319 (AAYVRYFNSSAFFFSGFFVVF) traverse the membrane as a helical segment. Topologically, residues 320 to 339 (LSVLPYALIKGIVLRKIFTT) are extracellular. A helical transmembrane segment spans residues 340–358 (ISFCIVLRMAVTRQFPWAV). Residues 359–858 (QTWYDSLGAI…YLRYITVHKS (500 aa)) lie on the Cytoplasmic side of the membrane. ATP-binding positions include Trp-401, Ser-434, 458–465 (GSTGAGKT), and Gln-493. The region spanning 423-646 (NDDDSLFFSN…RPDFSSKLMG (224 aa)) is the ABC transporter 1 domain. Cys-524 carries S-palmitoyl cysteine lipidation. Residues Ser-549 and Ser-660 each carry the phosphoserine modification. Positions 654–831 (SAERRNSILT…EEINEEDLKE (178 aa)) are disordered R region. The residue at position 670 (Ser-670) is a Phosphoserine; by PKA. A Phosphoserine modification is found at Ser-686. Lys-688 participates in a covalent cross-link: Glycyl lysine isopeptide (Lys-Gly) (interchain with G-Cter in ubiquitin). 2 positions are modified to phosphoserine: Ser-700 and Ser-712. Position 717 is a phosphothreonine (Thr-717). 6 positions are modified to phosphoserine: Ser-737, Ser-753, Ser-768, Ser-790, Ser-795, and Ser-813. The helical transmembrane segment at 859–879 (LIFVLIWCLVIFLAEVAASLV) threads the bilayer. One can recognise an ABC transmembrane type-1 2 domain in the interval 859 to 1155 (LIFVLIWCLV…AVNSSIDVDS (297 aa)). Residues 880–918 (VLWFLGNTPPQDKGNSTYSRNNSYAVIITRTSSYYVFYI) are Extracellular-facing. Residues Asn-894 and Asn-900 are each glycosylated (N-linked (GlcNAc...) asparagine). The discontinuously helical transmembrane segment at 919–939 (YVGVADTLLAMGFFRGLPLVH) threads the bilayer. Over 940–990 (TLITVSKILHHKMLHSVLQAPMSTLNTLKAGGILNRFSKDIAILDDLLPLT) the chain is Cytoplasmic. Residues 991 to 1011 (IFDFIQLLLIVIGAIAVVAVL) form a helical membrane-spanning segment. The Extracellular segment spans residues 1012 to 1013 (QP). Residues 1014 to 1034 (YIFVATVPVIVAFIMLRAYFL) traverse the membrane as a helical segment. The Cytoplasmic segment spans residues 1035–1095 (QTSQQLKQLE…TANWFLYLST (61 aa)). The helical transmembrane segment at 1096–1116 (LRWFQMRIEMIFVIFFIAVTF) threads the bilayer. Residues 1117–1130 (ISILTTGEGEGTVG) are Extracellular-facing. A helical membrane pass occupies residues 1131 to 1151 (IILTLAMNIMSTLQWAVNSSI). The Cytoplasmic portion of the chain corresponds to 1152-1481 (DVDSLMRSVS…TEEEVQDTRL (330 aa)). Residues 1211 to 1444 (MTVKDLTAKY…RSLFRQAISP (234 aa)) form the ABC transporter 2 domain. ATP contacts are provided by residues Tyr-1220 and 1245-1252 (GRTGSGKS). The tract at residues 1387–1481 (RTLKQAFADC…TEEEVQDTRL (95 aa)) is interaction with GORASP2. Cys-1396 carries S-palmitoyl cysteine lipidation. Residues Ser-1445 and Ser-1457 each carry the phosphoserine modification. A disordered region spans residues 1462-1481 (QPQIAALKEETEEEVQDTRL). Positions 1471-1481 (ETEEEVQDTRL) are enriched in acidic residues. Positions 1479–1481 (TRL) match the PDZ-binding motif.

This sequence belongs to the ABC transporter superfamily. ABCC family. CFTR transporter (TC 3.A.1.202) subfamily. Monomer; does not require oligomerization for channel activity. May form oligomers in the membrane. Interacts with SLC26A3, SLC26A6 and NHERF1. Interacts with SHANK2. Interacts with MYO6. Interacts (via C-terminus) with GOPC (via PDZ domain); this promotes CFTR internalization and thereby decreases channel activity. Interacts with SLC4A7 through NHERF1. Found in a complex with MYO5B and RAB11A. Interacts with ANO1. Interacts with SLC26A8. Interacts with AHCYL1; the interaction increases CFTR activity. Interacts with CSE1L. The core-glycosylated form interacts with GORASP2 (via PDZ GRASP-type 1 domain) in respone to ER stress. Interacts with MARCHF2; the interaction leads to CFTR ubiqtuitination and degradation. Interacts with ADGRG2. Post-translationally, N-glycosylated. Phosphorylated; cAMP treatment promotes phosphorylation and activates the channel. Dephosphorylation decreases the ATPase activity (in vitro). Phosphorylation at PKA sites activates the channel. Phosphorylation at PKC sites enhances the response to phosphorylation by PKA. Phosphorylated by AMPK; this inhibits channel activity. In terms of processing, ubiquitinated, leading to its degradation in the lysosome. Deubiquitination by USP10 in early endosomes enhances its endocytic recycling to the cell membrane. Ubiquitinated by RNF185 during ER stress. Ubiquitinated by MARCHF2.

It is found in the apical cell membrane. The protein localises to the early endosome membrane. Its subcellular location is the cell membrane. The protein resides in the recycling endosome membrane. It localises to the endoplasmic reticulum membrane. It is found in the nucleus. It catalyses the reaction ATP + H2O + closed Cl(-) channel = ADP + phosphate + open Cl(-) channel.. The enzyme catalyses chloride(in) = chloride(out). The catalysed reaction is hydrogencarbonate(in) = hydrogencarbonate(out). It carries out the reaction ATP + H2O = ADP + phosphate + H(+). Epithelial ion channel that plays an important role in the regulation of epithelial ion and water transport and fluid homeostasis. Mediates the transport of chloride ions across the cell membrane. Possesses an intrinsic ATPase activity and utilizes ATP to gate its channel; the passive flow of anions through the channel is gated by cycles of ATP binding and hydrolysis by the ATP-binding domains. The ion channel is also permeable to HCO(3)(-); selectivity depends on the extracellular chloride concentration. Exerts its function also by modulating the activity of other ion channels and transporters. Contributes to the regulation of the pH and the ion content of the epithelial fluid layer. Modulates the activity of the epithelial sodium channel (ENaC) complex, in part by regulating the cell surface expression of the ENaC complex. May regulate bicarbonate secretion and salvage in epithelial cells by regulating the transporter SLC4A7. Can inhibit the chloride channel activity of ANO1. Plays a role in the chloride and bicarbonate homeostasis during sperm epididymal maturation and capacitation. In Chlorocebus aethiops (Green monkey), this protein is Cystic fibrosis transmembrane conductance regulator.